A 361-amino-acid chain; its full sequence is Peptide chain release factor 1 (361 aa).

Gln-237 carries the post-translational modification N5-methylglutamine. Residues Ala-286–Ser-306 are disordered.

This sequence belongs to the prokaryotic/mitochondrial release factor family. Methylated by PrmC. Methylation increases the termination efficiency of RF1.

It is found in the cytoplasm. Functionally, peptide chain release factor 1 directs the termination of translation in response to the peptide chain termination codons UAG and UAA. This is Peptide chain release factor 1 from Coxiella burnetii (strain CbuK_Q154) (Coxiella burnetii (strain Q154)).